The primary structure comprises 407 residues: Imidazolonepropionase (407 aa).

His74 and His76 together coordinate Fe(3+). Positions 74 and 76 each coordinate Zn(2+). 4-imidazolone-5-propanoate is bound by residues Arg83, Tyr146, and His179. Residue Tyr146 participates in N-formimidoyl-L-glutamate binding. A Fe(3+)-binding site is contributed by His244. His244 contributes to the Zn(2+) binding site. Gln247 is a 4-imidazolone-5-propanoate binding site. Fe(3+) is bound at residue Asp319. Residue Asp319 participates in Zn(2+) binding. 2 residues coordinate N-formimidoyl-L-glutamate: Asn321 and Gly323. Thr324 contacts 4-imidazolone-5-propanoate.

It belongs to the metallo-dependent hydrolases superfamily. HutI family. Zn(2+) is required as a cofactor. Requires Fe(3+) as cofactor.

It is found in the cytoplasm. It catalyses the reaction 4-imidazolone-5-propanoate + H2O = N-formimidoyl-L-glutamate. Its pathway is amino-acid degradation; L-histidine degradation into L-glutamate; N-formimidoyl-L-glutamate from L-histidine: step 3/3. Catalyzes the hydrolytic cleavage of the carbon-nitrogen bond in imidazolone-5-propanoate to yield N-formimidoyl-L-glutamate. It is the third step in the universal histidine degradation pathway. The sequence is that of Imidazolonepropionase from Salmonella paratyphi A (strain ATCC 9150 / SARB42).